Consider the following 1215-residue polypeptide: Protein benign gonial cell neoplasm (1215 aa).

One copy of the ANK repeat lies at 407–439 (TGKTAVHFASELNKANHLRLLLFMGADPYIVDL). Position 898 is a phosphothreonine (Thr898).

In terms of assembly, part of a complex composed of at least mei-P26, bam, bgcn and Sxl; this complex is involved in translational repression of nanos mRNA. Interacts with bam (via C-terminus); the interaction is direct. Interacts with mei-P26; the interaction is direct and does not require bam. Weakly interacts with wh/wuho; this interaction may be required for the function or formation of the mei-P26-bgcn-bam-Sxl complex. Part of a complex composed of at least tut, bam and bgcn; complex formation does not require RNA. Interacts with tut; the interaction is indirect and is mediated by bam. As part of the bam-bgcn-tut complex associates with twin; may recruit the CCR4-NOT1 deadenylation complex to mRNA 3'UTRs to mediate post-transcriptional regulation of expression. Expressed in testis and in 5-8 germline stem cells of ovaries, immediately adjacent to terminal filament. Expressed in ovarian germline cells throughout the germarium (at protein level).

Forms a complex with tut and bam involved in 3'UTR-dependent post-transcriptional repression of several 3'-RNA processing factors, which promotes germline stem cell lineage differentiation and mitosis-to-meiosis transition. Part of a complex with bam involved in 3'-UTR-dependent translational repression of a subset of mRNAs, including those for mei-P26, nanos and shg/E-cadherin; may act as a promiscuous RNA-binding protein tethering bam to its target mRNAs. Required for regulating the progression of gonialblast cells through transit amplification and differentiation into gametes. The sequence is that of Protein benign gonial cell neoplasm from Drosophila melanogaster (Fruit fly).